Consider the following 251-residue polypeptide: Proteasome subunit alpha type-4-like (251 aa).

This sequence belongs to the peptidase T1A family. In terms of assembly, the 26S proteasome consists of a 20S proteasome core and two 19S regulatory subunits. The 20S proteasome core is composed of 28 subunits that are arranged in four stacked rings, resulting in a barrel-shaped structure. The two end rings are each formed by seven alpha subunits, and the two central rings are each formed by seven beta subunits. The catalytic chamber with the active sites is on the inside of the barrel. In terms of tissue distribution, testis, prominent after meiosis II. After meiosis, predominantly localized to the haploid spermatid nuclei of the 64-cell cysts, remaining during the elongation and condensation of the spermatid nuclei. In mature, motile sperm, expression is seen exclusively in the sperm head.

The protein localises to the nucleus. Its function is as follows. The proteasome is a multicatalytic proteinase complex which is characterized by its ability to cleave peptides with Arg, Phe, Tyr, Leu, and Glu adjacent to the leaving group at neutral or slightly basic pH. The proteasome has an ATP-dependent proteolytic activity. The polypeptide is Proteasome subunit alpha type-4-like (Prosalpha3T) (Drosophila melanogaster (Fruit fly)).